The following is a 340-amino-acid chain: Protein RecA (340 aa).

Residue Gly66–Thr73 participates in ATP binding.

The protein belongs to the RecA family.

Its subcellular location is the cytoplasm. In terms of biological role, can catalyze the hydrolysis of ATP in the presence of single-stranded DNA, the ATP-dependent uptake of single-stranded DNA by duplex DNA, and the ATP-dependent hybridization of homologous single-stranded DNAs. It interacts with LexA causing its activation and leading to its autocatalytic cleavage. The chain is Protein RecA from Rickettsia prowazekii (strain Madrid E).